The sequence spans 33 residues: Brevinin-2 (33 aa).

Cys27 and Cys33 are disulfide-bonded.

Belongs to the frog skin active peptide (FSAP) family. Brevinin subfamily. In terms of tissue distribution, expressed by the skin glands.

The protein resides in the secreted. Functionally, shows antibacterial activity against representative Gram-negative and Gram-positive bacterial species, and a very high hemolytic activity. The protein is Brevinin-2 of Pelophylax porosus brevipodus (Nagoya Daruma pond frog).